A 66-amino-acid polypeptide reads, in one-letter code: Sec-independent protein translocase protein TatA (66 aa).

The chain crosses the membrane as a helical span at residues Met-1–Arg-21. A disordered region spans residues Ala-43–Glu-66. Basic and acidic residues predominate over residues Pro-50–Glu-66.

The protein belongs to the TatA/E family. In terms of assembly, the Tat system comprises two distinct complexes: a TatABC complex, containing multiple copies of TatA, TatB and TatC subunits, and a separate TatA complex, containing only TatA subunits. Substrates initially bind to the TatABC complex, which probably triggers association of the separate TatA complex to form the active translocon.

It localises to the cell inner membrane. In terms of biological role, part of the twin-arginine translocation (Tat) system that transports large folded proteins containing a characteristic twin-arginine motif in their signal peptide across membranes. TatA could form the protein-conducting channel of the Tat system. The chain is Sec-independent protein translocase protein TatA from Pelagibacter ubique (strain HTCC1062).